We begin with the raw amino-acid sequence, 282 residues long: tRNA pseudouridine synthase B (282 aa).

Catalysis depends on Asp36, which acts as the Nucleophile.

It belongs to the pseudouridine synthase TruB family. Type 1 subfamily.

It catalyses the reaction uridine(55) in tRNA = pseudouridine(55) in tRNA. In terms of biological role, responsible for synthesis of pseudouridine from uracil-55 in the psi GC loop of transfer RNAs. This Mycoplasmopsis pulmonis (strain UAB CTIP) (Mycoplasma pulmonis) protein is tRNA pseudouridine synthase B.